Here is a 383-residue protein sequence, read N- to C-terminus: BRISC and BRCA1-A complex member 2 (383 aa).

2 UEV-like regions span residues 30-147 (DATN…TLLE) and 275-364 (IAAF…RAKA).

Belongs to the BABAM2 family. As to quaternary structure, component of the ARISC complex, at least composed of UIMC1/RAP80, ABRAXAS1, BRCC3/BRCC36, BABAM2 and BABAM1/NBA1. Component of the BRCA1-A complex, at least composed of BRCA1, BARD1, UIMC1/RAP80, ABRAXAS1, BRCC3/BRCC36, BABAM2 and BABAM1/NBA1. In the BRCA1-A complex, interacts directly with ABRAXAS1, BRCC3/BRCC36 and BABAM1/NBA1. Binds polyubiquitin. Component of the BRISC complex, at least composed of ABRAXAS2, BRCC3/BRCC36, BABAM2 and BABAM1/NBA1. Identified in a complex with SHMT2 and the other subunits of the BRISC complex. Component of the BRCA1/BRCA2 containing complex (BRCC), which also contains BRCA1, BRCA2, BARD1, BRCC3/BRCC36 and RAD51. BRCC is a ubiquitin E3 ligase complex that enhances cellular survival following DNA damage. May interact with FAS and TNFRSF1A.

It localises to the cytoplasm. The protein resides in the nucleus. Its function is as follows. Component of the BRCA1-A complex, a complex that specifically recognizes 'Lys-63'-linked ubiquitinated histones H2A and H2AX at DNA lesions sites, leading to target the BRCA1-BARD1 heterodimer to sites of DNA damage at double-strand breaks (DSBs). The BRCA1-A complex also possesses deubiquitinase activity that specifically removes 'Lys-63'-linked ubiquitin on histones H2A and H2AX. In the BRCA1-A complex, it acts as an adapter that bridges the interaction between BABAM1/NBA1 and the rest of the complex, thereby being required for the complex integrity and modulating the E3 ubiquitin ligase activity of the BRCA1-BARD1 heterodimer. Component of the BRISC complex, a multiprotein complex that specifically cleaves 'Lys-63'-linked ubiquitin in various substrates. Within the BRISC complex, acts as an adapter that bridges the interaction between BABAM1/NBA1 and the rest of the complex, thereby being required for the complex integrity. The BRISC complex is required for normal mitotic spindle assembly and microtubule attachment to kinetochores via its role in deubiquitinating NUMA1. The BRISC complex plays a role in interferon signaling via its role in the deubiquitination of the interferon receptor IFNAR1; deubiquitination increases IFNAR1 activity by enhancing its stability and cell surface expression. Down-regulates the response to bacterial lipopolysaccharide (LPS) via its role in IFNAR1 deubiquitination. May play a role in homeostasis or cellular differentiation in cells of neural, epithelial and germline origins. May also act as a death receptor-associated anti-apoptotic protein, which inhibits the mitochondrial apoptotic pathway. May regulate TNF-alpha signaling through its interactions with TNFRSF1A; however these effects may be indirect. The polypeptide is BRISC and BRCA1-A complex member 2 (BABAM2) (Gallus gallus (Chicken)).